Consider the following 206-residue polypeptide: Venom allergen 5 (206 aa).

Disulfide bonds link Cys5–Cys18, Cys9–Cys103, Cys28–Cys96, and Cys172–Cys189. An SCP domain is found at 47–191 (LKVHNDFRQK…WYTHYLVCNY (145 aa)).

This sequence belongs to the CRISP family. Venom allergen 5-like subfamily. Expressed by the venom gland.

The protein localises to the secreted. The protein is Venom allergen 5 of Vespula vidua (Ground hornet).